The chain runs to 91 residues: Small ribosomal subunit protein uS15c (91 aa).

The protein belongs to the universal ribosomal protein uS15 family. Part of the 30S ribosomal subunit.

The protein localises to the plastid. Its subcellular location is the chloroplast. This is Small ribosomal subunit protein uS15c (rps15) from Eucalyptus globulus subsp. globulus (Tasmanian blue gum).